Here is a 188-residue protein sequence, read N- to C-terminus: Gamma-glutamylcyclotransferase (188 aa).

Tyr19 to Tyr22 lines the substrate pocket. The Proton acceptor role is filled by Glu98. Ser173 carries the phosphoserine modification.

It belongs to the gamma-glutamylcyclotransferase family. Homodimer.

The catalysed reaction is an alpha-(gamma-L-glutamyl)-L-amino acid = 5-oxo-L-proline + an L-alpha-amino acid. Its function is as follows. Catalyzes the formation of 5-oxoproline from gamma-glutamyl dipeptides and may play a significant role in glutathione homeostasis. Induces release of cytochrome c from mitochondria with resultant induction of apoptosis. The sequence is that of Gamma-glutamylcyclotransferase (Ggct) from Mus musculus (Mouse).